The chain runs to 152 residues: Cyanate hydratase (152 aa).

Active-site residues include R98, E101, and S124.

Belongs to the cyanase family.

The catalysed reaction is cyanate + hydrogencarbonate + 3 H(+) = NH4(+) + 2 CO2. Catalyzes the reaction of cyanate with bicarbonate to produce ammonia and carbon dioxide. The polypeptide is Cyanate hydratase (Uncinocarpus reesii (strain UAMH 1704)).